The primary structure comprises 376 residues: N-acetyldiaminopimelate deacetylase (376 aa).

Residue D69 is part of the active site. E128 serves as the catalytic Proton acceptor.

This sequence belongs to the peptidase M20A family. N-acetyldiaminopimelate deacetylase subfamily.

It carries out the reaction N-acetyl-(2S,6S)-2,6-diaminopimelate + H2O = (2S,6S)-2,6-diaminopimelate + acetate. It functions in the pathway amino-acid biosynthesis; L-lysine biosynthesis via DAP pathway; LL-2,6-diaminopimelate from (S)-tetrahydrodipicolinate (acetylase route): step 3/3. Functionally, catalyzes the conversion of N-acetyl-diaminopimelate to diaminopimelate and acetate. This is N-acetyldiaminopimelate deacetylase from Streptococcus pneumoniae (strain Hungary19A-6).